Here is a 261-residue protein sequence, read N- to C-terminus: MNPFEGIVMGIVQGLTEFLPVSSSAHLVLVPWLFGFETPGLVFDVALHLGTLVAVLVYFWRDWLRLVQAGSRGVGTADGRLFWFLVVATIPGVVVGYFLEDIVETTLRAPLLIGVLLIMMGGVLYLADRYGGQVKRLLDIRFGDAMAIGLSQALAIIPGVSRSGITMATARLRGVERAAAARFSFLLSTPIIFGAGLMQMLKMDPGLLNLSFVLGVFTSAVVGFLAIWFLISWVSRHSFNIFVIYRVLLGLTVIVIALLRG.

The next 8 helical transmembrane spans lie at 16 to 36 (TEFLPVSSSAHLVLVPWLFGF), 40 to 60 (GLVFDVALHLGTLVAVLVYFW), 82 to 102 (FWFLVVATIPGVVVGYFLEDI), 107 to 127 (LRAPLLIGVLLIMMGGVLYLA), 140 to 160 (IRFGDAMAIGLSQALAIIPGV), 183 to 203 (FSFLLSTPIIFGAGLMQMLKM), 211 to 231 (SFVLGVFTSAVVGFLAIWFLI), and 239 to 259 (FNIFVIYRVLLGLTVIVIALL).

It belongs to the UppP family.

It is found in the cell membrane. The enzyme catalyses di-trans,octa-cis-undecaprenyl diphosphate + H2O = di-trans,octa-cis-undecaprenyl phosphate + phosphate + H(+). Catalyzes the dephosphorylation of undecaprenyl diphosphate (UPP). Confers resistance to bacitracin. The protein is Undecaprenyl-diphosphatase of Desulforudis audaxviator (strain MP104C).